We begin with the raw amino-acid sequence, 218 residues long: Large ribosomal subunit protein uL3 (218 aa).

Positions 127–167 (GFSRGPMSHGSKNHREPGSTGAGTTPGRIYPGKRMAGRYGG) are disordered.

Belongs to the universal ribosomal protein uL3 family. In terms of assembly, part of the 50S ribosomal subunit. Forms a cluster with proteins L14 and L19.

Its function is as follows. One of the primary rRNA binding proteins, it binds directly near the 3'-end of the 23S rRNA, where it nucleates assembly of the 50S subunit. The polypeptide is Large ribosomal subunit protein uL3 (Prochlorococcus marinus (strain MIT 9303)).